The primary structure comprises 206 residues: Large ribosomal subunit protein uL4 (206 aa).

The segment covering 42-54 has biased composition (polar residues); sequence RRQQGTHQSQGRS. The interval 42–93 is disordered; that stretch reads RRQQGTHQSQGRSDVSRTGAKMFKQKGTGRARHSSARAPQFRGGGKAHGPVV. Over residues 64 to 76 the composition is skewed to basic residues; it reads FKQKGTGRARHSS.

The protein belongs to the universal ribosomal protein uL4 family. As to quaternary structure, part of the 50S ribosomal subunit.

In terms of biological role, one of the primary rRNA binding proteins, this protein initially binds near the 5'-end of the 23S rRNA. It is important during the early stages of 50S assembly. It makes multiple contacts with different domains of the 23S rRNA in the assembled 50S subunit and ribosome. Its function is as follows. Forms part of the polypeptide exit tunnel. This is Large ribosomal subunit protein uL4 from Bartonella henselae (strain ATCC 49882 / DSM 28221 / CCUG 30454 / Houston 1) (Rochalimaea henselae).